Here is a 237-residue protein sequence, read N- to C-terminus: MKSLSFLNHEFEAFPSPELALTDPNGLLAIGGDLRPERLLSAYYNGIFPWFNSDDPILWWSPDPRAVFIPGEIHISTSLRKYLKKQPWRITINHAFTDVMAGCAQPREKQSGTWITQEIQMAYRELHHTGHAHSIEVWEGERLIGGLYGLAIGQVFCGESMFHRKTNASKAAVAALQQHLLKMGFKLIDAQVMNPHLESLGAKAIKRIDFITLLSELRNNPVDPTTWTTKEVILELE.

It belongs to the L/F-transferase family.

It is found in the cytoplasm. It carries out the reaction N-terminal L-lysyl-[protein] + L-leucyl-tRNA(Leu) = N-terminal L-leucyl-L-lysyl-[protein] + tRNA(Leu) + H(+). It catalyses the reaction N-terminal L-arginyl-[protein] + L-leucyl-tRNA(Leu) = N-terminal L-leucyl-L-arginyl-[protein] + tRNA(Leu) + H(+). The enzyme catalyses L-phenylalanyl-tRNA(Phe) + an N-terminal L-alpha-aminoacyl-[protein] = an N-terminal L-phenylalanyl-L-alpha-aminoacyl-[protein] + tRNA(Phe). Functionally, functions in the N-end rule pathway of protein degradation where it conjugates Leu, Phe and, less efficiently, Met from aminoacyl-tRNAs to the N-termini of proteins containing an N-terminal arginine or lysine. This Shewanella baltica (strain OS155 / ATCC BAA-1091) protein is Leucyl/phenylalanyl-tRNA--protein transferase.